The primary structure comprises 185 residues: Putative gustatory receptor clone PTE01 (185 aa).

Residues 1 to 11 (MYLFLSNLSLA) form a helical membrane-spanning segment. The Extracellular portion of the chain corresponds to 12–42 (DISFTSTTLPKMIVDIQTNNRAISYSGCLTQ). Residues 43 to 62 (MSFFMLFGCLDSLLLTAMAY) form a helical membrane-spanning segment. The Cytoplasmic portion of the chain corresponds to 63 to 84 (DRFVAICHPLHYQVIMNPRLCG). The helical transmembrane segment at 85–105 (LLVFLSILISLLVSQLHNSVV) threads the bilayer. Residues 106-138 (LQLTYFKSVDISHFFCDPSLLLNLACSDTFTNN) lie on the Extracellular side of the membrane. A helical transmembrane segment spans residues 139–160 (IVMYFVGAISGFLPISGIFFSY). Residues 161 to 182 (YKIVSSILRMPSPGGKYKAFST) are Cytoplasmic-facing. A helical transmembrane segment spans residues 183–185 (CGS).

The protein belongs to the G-protein coupled receptor 1 family. In terms of tissue distribution, tongue specific.

Its subcellular location is the cell membrane. Its function is as follows. Possible taste receptor. This chain is Putative gustatory receptor clone PTE01, found in Rattus norvegicus (Rat).